We begin with the raw amino-acid sequence, 1785 residues long: 1,3-beta-glucan synthase component FKS3 (1785 aa).

The next 8 membrane-spanning stretches (helical) occupy residues 337–357, 375–395, 415–435, 444–464, 508–528, 547–567, 572–592, and 712–732; these read FWII…PTLY, LSVI…ATVF, IGLL…LGFF, AYIV…FFAV, LWVF…TLSL, YLLG…LMLL, LFFL…SIVL, and LATP…TVLV. 2 stretches are compositionally biased toward basic and acidic residues: residues 791-801 and 815-824; these read ESSHDEDRLEI and DHTESRKLPT. The interval 791-824 is disordered; it reads ESSHDEDRLEIPDALYDPRSSPLSDHTESRKLPT. Asn844, Asn874, Asn955, Asn1002, and Asn1170 each carry an N-linked (GlcNAc...) asparagine glycan. A run of 3 helical transmembrane segments spans residues 1215 to 1235, 1268 to 1288, and 1303 to 1323; these read LFIS…GALN, VSIF…PLLI, and FLHH…QVYS. Asn1360 is a glycosylation site (N-linked (GlcNAc...) asparagine). Helical transmembrane passes span 1370-1390, 1394-1414, 1475-1495, 1514-1534, and 1549-1569; these read FFML…WFWI, SMCF…DFFI, FAEL…FSFI, LLVT…LFWV, and AGAV…LLDF. An N-linked (GlcNAc...) asparagine glycan is attached at Asn1579. 3 consecutive transmembrane segments (helical) span residues 1585–1605, 1655–1675, and 1713–1733; these read ILLI…TTIF, FFLG…PFID, and FSLY…PFFA. Residue Asn1761 is glycosylated (N-linked (GlcNAc...) asparagine).

It belongs to the glycosyltransferase 48 family. Post-translationally, N-glycosylated.

Its subcellular location is the mitochondrion. It is found in the membrane. It carries out the reaction [(1-&gt;3)-beta-D-glucosyl](n) + UDP-alpha-D-glucose = [(1-&gt;3)-beta-D-glucosyl](n+1) + UDP + H(+). In terms of biological role, required for spore wall assembly. In Saccharomyces cerevisiae (strain ATCC 204508 / S288c) (Baker's yeast), this protein is 1,3-beta-glucan synthase component FKS3 (FKS3).